Here is a 202-residue protein sequence, read N- to C-terminus: Imidazoleglycerol-phosphate dehydratase (202 aa).

Belongs to the imidazoleglycerol-phosphate dehydratase family.

It localises to the cytoplasm. The enzyme catalyses D-erythro-1-(imidazol-4-yl)glycerol 3-phosphate = 3-(imidazol-4-yl)-2-oxopropyl phosphate + H2O. It functions in the pathway amino-acid biosynthesis; L-histidine biosynthesis; L-histidine from 5-phospho-alpha-D-ribose 1-diphosphate: step 6/9. The chain is Imidazoleglycerol-phosphate dehydratase from Acinetobacter baylyi (strain ATCC 33305 / BD413 / ADP1).